Reading from the N-terminus, the 459-residue chain is Trigger factor (459 aa).

Residues 166–245 (GDFANIDLTA…VNSVKAEELP (80 aa)) form the PPIase FKBP-type domain.

The protein belongs to the FKBP-type PPIase family. Tig subfamily.

The protein localises to the cytoplasm. The enzyme catalyses [protein]-peptidylproline (omega=180) = [protein]-peptidylproline (omega=0). In terms of biological role, involved in protein export. Acts as a chaperone by maintaining the newly synthesized protein in an open conformation. Functions as a peptidyl-prolyl cis-trans isomerase. This is Trigger factor from Bifidobacterium longum (strain DJO10A).